A 331-amino-acid polypeptide reads, in one-letter code: Laforin (331 aa).

Residues 1–124 (MRFRFGVVVP…NNLVDGVYCL (124 aa)) form the CBM20 domain. Phosphoserine; by AMPK is present on serine 25. Residues tryptophan 32, lysine 87, 103–107 (GPHHD), aspartate 197, aspartate 235, and arginine 241 contribute to the substrate site. Residues 156–323 (HYSRILPNIW…QEDFFQKFGK (168 aa)) enclose the Tyrosine-protein phosphatase domain. Cysteine 266 acts as the Phosphocysteine intermediate in catalysis. Residues 266–272 (CNAGVGR) carry the Glucan phosphatase signature motif CXAGXGR motif. Residues 267 to 272 (NAGVGR) and tyrosine 304 contribute to the substrate site.

Belongs to the protein-tyrosine phosphatase family. In terms of assembly, homodimer. Interacts with itself. Interacts with PPP1R3B, PPP1R3C, PPP1R3D, HIRIP5, and EPM2AIP1. Binds glycogen and Lafora bodies. Interacts with NHLRC1/malin (via the NHL repeats). Forms a complex with NHLRC1/malin and HSP70. Interacts with PPP1R3D; in the presence of NHLC1/malin the interaction leads to ubiquitination and autophagic degradation of PPP1R3D. Interacts (via the phosphatase domain) with MAPT/Tau; the interaction dephosphorylates MAPT. Isoform 1 and isoform 2 interact to form a heterodimeric complex that lacks phosphatase activity (in vitro). Active phosphatase isoform 7 and isoform 1 interact with each other, but give rise to lower phosphatase activity than isoform 1 or isoform 7 by themselves (in vitro). Active phosphatase isoform 7 and inactive isoform 2 interact with each other, but give rise to lower phosphatase activity than isoform 7 by itself (in vitro). Interacts with PRDM8. Polyubiquitinated by NHLRC1/malin. Post-translationally, phosphorylation on Ser-25 by AMPK affects the phosphatase activity of the enzyme and its ability to homodimerize and interact with NHLRC1, PPP1R3C or PRKAA2. In terms of tissue distribution, expressed in heart, skeletal muscle, kidney, pancreas and brain. Isoform 4 is also expressed in the placenta.

Its subcellular location is the cytoplasm. It localises to the endoplasmic reticulum membrane. The protein resides in the cell membrane. The protein localises to the nucleus. It catalyses the reaction O-phospho-L-tyrosyl-[protein] + H2O = L-tyrosyl-[protein] + phosphate. The catalysed reaction is O-phospho-L-seryl-[protein] + H2O = L-seryl-[protein] + phosphate. The enzyme catalyses O-phospho-L-threonyl-[protein] + H2O = L-threonyl-[protein] + phosphate. In terms of biological role, plays an important role in preventing glycogen hyperphosphorylation and the formation of insoluble aggregates, via its activity as glycogen phosphatase, and by promoting the ubiquitination of proteins involved in glycogen metabolism via its interaction with the E3 ubiquitin ligase NHLRC1/malin. Shows strong phosphatase activity towards complex carbohydrates in vitro, avoiding glycogen hyperphosphorylation which is associated with reduced branching and formation of insoluble aggregates. Dephosphorylates phosphotyrosine and synthetic substrates, such as para-nitrophenylphosphate (pNPP), and has low activity with phosphoserine and phosphothreonine substrates (in vitro). Has been shown to dephosphorylate MAPT. Forms a complex with NHLRC1/malin and HSP70, which suppresses the cellular toxicity of misfolded proteins by promoting their degradation through the ubiquitin-proteasome system (UPS). Acts as a scaffold protein to facilitate PPP1R3C/PTG ubiquitination by NHLRC1/malin. Also promotes proteasome-independent protein degradation through the macroautophagy pathway. Its function is as follows. Does not bind to glycogen. Lacks phosphatase activity and might function as a dominant-negative regulator for the phosphatase activity of isoform 1 and isoform 7. Functionally, has phosphatase activity (in vitro). This chain is Laforin (EPM2A), found in Homo sapiens (Human).